The following is a 235-amino-acid chain: Phosphoribosylaminoimidazole-succinocarboxamide synthase (235 aa).

Belongs to the SAICAR synthetase family.

The enzyme catalyses 5-amino-1-(5-phospho-D-ribosyl)imidazole-4-carboxylate + L-aspartate + ATP = (2S)-2-[5-amino-1-(5-phospho-beta-D-ribosyl)imidazole-4-carboxamido]succinate + ADP + phosphate + 2 H(+). It participates in purine metabolism; IMP biosynthesis via de novo pathway; 5-amino-1-(5-phospho-D-ribosyl)imidazole-4-carboxamide from 5-amino-1-(5-phospho-D-ribosyl)imidazole-4-carboxylate: step 1/2. This chain is Phosphoribosylaminoimidazole-succinocarboxamide synthase, found in Chlorobaculum parvum (strain DSM 263 / NCIMB 8327) (Chlorobium vibrioforme subsp. thiosulfatophilum).